The primary structure comprises 196 residues: Probable nicotinate-nucleotide adenylyltransferase (196 aa).

It belongs to the NadD family.

It carries out the reaction nicotinate beta-D-ribonucleotide + ATP + H(+) = deamido-NAD(+) + diphosphate. It functions in the pathway cofactor biosynthesis; NAD(+) biosynthesis; deamido-NAD(+) from nicotinate D-ribonucleotide: step 1/1. In terms of biological role, catalyzes the reversible adenylation of nicotinate mononucleotide (NaMN) to nicotinic acid adenine dinucleotide (NaAD). The sequence is that of Probable nicotinate-nucleotide adenylyltransferase from Thermotoga sp. (strain RQ2).